The following is a 117-amino-acid chain: Ig heavy chain V region MOPC 173 (117 aa).

The region spanning 1–116 (EVKLLESGGP…WGQGTSVTVS (116 aa)) is the Ig-like domain. A disulfide bridge connects residues cysteine 22 and cysteine 96.

This chain is Ig heavy chain V region MOPC 173, found in Mus musculus (Mouse).